A 239-amino-acid chain; its full sequence is tRNA (guanine-N(1)-)-methyltransferase (239 aa).

S-adenosyl-L-methionine is bound by residues Gly112 and 132 to 137 (IGDYVL).

Belongs to the RNA methyltransferase TrmD family. As to quaternary structure, homodimer.

Its subcellular location is the cytoplasm. The catalysed reaction is guanosine(37) in tRNA + S-adenosyl-L-methionine = N(1)-methylguanosine(37) in tRNA + S-adenosyl-L-homocysteine + H(+). In terms of biological role, specifically methylates guanosine-37 in various tRNAs. The sequence is that of tRNA (guanine-N(1)-)-methyltransferase from Rhodospirillum rubrum (strain ATCC 11170 / ATH 1.1.1 / DSM 467 / LMG 4362 / NCIMB 8255 / S1).